The sequence spans 212 residues: Elongation factor Ts (212 aa).

The segment at 82–85 (SDFV) is involved in Mg(2+) ion dislocation from EF-Tu.

It belongs to the EF-Ts family.

The protein localises to the cytoplasm. In terms of biological role, associates with the EF-Tu.GDP complex and induces the exchange of GDP to GTP. It remains bound to the aminoacyl-tRNA.EF-Tu.GTP complex up to the GTP hydrolysis stage on the ribosome. The chain is Elongation factor Ts from Solibacter usitatus (strain Ellin6076).